The primary structure comprises 245 residues: Ribosomal RNA small subunit methyltransferase J (245 aa).

Residues 94–95 (RD), 110–111 (ER), and Asp164 contribute to the S-adenosyl-L-methionine site.

It belongs to the methyltransferase superfamily. RsmJ family.

The protein localises to the cytoplasm. The catalysed reaction is guanosine(1516) in 16S rRNA + S-adenosyl-L-methionine = N(2)-methylguanosine(1516) in 16S rRNA + S-adenosyl-L-homocysteine + H(+). Its function is as follows. Specifically methylates the guanosine in position 1516 of 16S rRNA. This Dechloromonas aromatica (strain RCB) protein is Ribosomal RNA small subunit methyltransferase J.